The primary structure comprises 1017 residues: Pikachurin (1017 aa).

Residues 1-24 form the signal peptide; sequence MDLIRGVLLRLLLLASSLGPGAVS. Fibronectin type-III domains follow at residues 37-136 and 144-239; these read PPLD…TLSQ and APQQ…TLCP. An N-linked (GlcNAc...) asparagine glycan is attached at N47. Positions 343-381 constitute an EGF-like 1 domain; the sequence is FDMPCDETLCSADSFCVNDYTWGGSRCQCTLGKGGESCS. Disulfide bonds link C347/C358, C352/C369, C371/C380, C534/C564, C569/C580, C574/C590, C592/C601, C788/C799, C793/C808, C810/C819, and C987/C1014. The Laminin G-like 1 domain occupies 386-564; sequence IQYPQFFGHS…ALSGADVGEC (179 aa). 2 consecutive EGF-like domains span residues 565-602 and 784-820; these read SSGI…RHCE and AAHP…LHCQ. The Laminin G-like 2 domain maps to 609–788; the sequence is IPQFRESLRS…VNVENAAHPC (180 aa). One can recognise a Laminin G-like 3 domain in the interval 835-1014; the sequence is IEIPQFIGRS…AVDGKNINTC (180 aa).

In terms of assembly, interacts with DAG1 alpha-dystroglycan. Interacts with GPR158 and GPR179; transsynaptic interaction is required for synaptic organization of photoreceptor cells. Post-translationally, O-glycosylated; contains chondroitin sulfate and heparan sulfate.

It is found in the secreted. It localises to the extracellular space. Its subcellular location is the extracellular matrix. The protein resides in the synaptic cleft. The protein localises to the presynaptic active zone. In terms of biological role, involved in both the retinal photoreceptor ribbon synapse formation and physiological functions of visual perception. Plays a key role in the synaptic organization of photoreceptors by mediating transsynaptic interaction between alpha-dystroglycan and GPR179 on the postsynaptic membrane. Necessary for proper bipolar dendritic tip apposition to the photoreceptor ribbon synapse. Promotes matrix assembly and cell adhesiveness. In Homo sapiens (Human), this protein is Pikachurin (EGFLAM).